The following is a 331-amino-acid chain: Geranylgeranyl transferase type-2 subunit beta (331 aa).

Position 2 is an N-acetylglycine (Gly2). The residue at position 3 (Thr3) is a Phosphothreonine. PFTB repeat units follow at residues 20–61, 68–109, 116–157, 164–205, 212–253, and 260–302; these read LEKH…DLMG, REEI…TLYD, INKV…ALLG, VEKA…AITS, SDLL…KIIG, and REKL…SLLG. 190-192 serves as a coordination point for geranylgeranyl diphosphate; the sequence is HAG. 2 residues coordinate Zn(2+): Asp238 and Cys240. 241–244 is a binding site for geranylgeranyl diphosphate; that stretch reads YSWW. His290 lines the Zn(2+) pocket.

Belongs to the protein prenyltransferase subunit beta family. As to quaternary structure, heterotrimer composed of RABGGTA, RABGGTB and CHM; within this trimer, RABGGTA and RABGGTB form the catalytic component B, while CHM (component A) mediates peptide substrate binding. The Rab GGTase dimer (RGGT) interacts with CHM (component A) prior to Rab protein binding; the association is stabilized by geranylgeranyl pyrophosphate (GGpp). The CHM:RGGT:Rab complex is destabilized by GGpp. Interaction of RABGGTB with prenylated PTP4A2 precludes its association with RABGGTA and inhibits enzyme activity. Interacts with CHODL. Interacts with non-phosphorylated form of RAB8A; phosphorylation of RAB8A at 'Thr-72' disrupts this interaction. Zn(2+) is required as a cofactor.

It carries out the reaction geranylgeranyl diphosphate + L-cysteinyl-[protein] = S-geranylgeranyl-L-cysteinyl-[protein] + diphosphate. With respect to regulation, the enzymatic reaction requires the aid of a Rab escort protein (also called component A). In terms of biological role, catalyzes the transfer of a geranylgeranyl moiety from geranylgeranyl diphosphate to both cysteines of Rab proteins with the C-terminal sequence -XXCC, -XCXC and -CCXX, such as RAB1A, RAB3A, RAB5A and RAB7A. The polypeptide is Geranylgeranyl transferase type-2 subunit beta (RABGGTB) (Bos taurus (Bovine)).